Here is a 164-residue protein sequence, read N- to C-terminus: MQFSISALVLGLAATVYALPPGAPSAGGAGSGNGVGNKGNTDVRFSVPDNMTVKQAQAKCGDQAQLSCCNKAVYAGDTTDINSGILGGTLSNLIGSGSGASGLGLFDQCSKLDLQIPVLIGIPIQDLINQKCKQNIACCQNSPSSANSDLIGLGLPCVALGSIL.

A signal peptide spans M1 to A18. Residue N50 is glycosylated (N-linked (GlcNAc...) asparagine). Cystine bridges form between C60-C138, C68-C132, C69-C109, and C139-C157.

Belongs to the fungal hydrophobin family. In terms of assembly, self-assembles to form functional amyloid fibrils called rodlets. Self-assembly into fibrillar rodlets occurs spontaneously at hydrophobic:hydrophilic interfaces and the rodlets further associate laterally to form amphipathic monolayers.

It localises to the secreted. It is found in the cell wall. Its function is as follows. Aerial growth, conidiation, and dispersal of filamentous fungi in the environment rely upon a capability of their secreting small amphipathic proteins called hydrophobins (HPBs) with low sequence identity. Class I can self-assemble into an outermost layer of rodlet bundles on aerial cell surfaces, conferring cellular hydrophobicity that supports fungal growth, development and dispersal; whereas Class II form highly ordered films at water-air interfaces through intermolecular interactions but contribute nothing to the rodlet structure. RodA is a class I hydrophobin involved in the cell surface hydrophobicity. The surface rodlet layer of the conidial cell wall makes airborne conidia of filamentous fungi inert to both innate and adaptive immunity. The chain is Class I hydrophobin rodA from Penicillium camemberti (strain FM 013).